A 288-amino-acid polypeptide reads, in one-letter code: dTDP-4-keto-6-deoxy-D-glucose reductase (288 aa).

Residues Gly-12–Leu-14, Asp-38–Ile-39, Ala-62–Thr-64, Tyr-127, and Lys-131 each bind NADH. Residues Met-13–Leu-14, Asp-38–Ile-39, Ala-62–Thr-64, Tyr-127, and Lys-131 contribute to the NADPH site. Residue Tyr-127 is the Proton donor/acceptor of the active site.

This sequence belongs to the dTDP-4-dehydrorhamnose reductase family. Requires Mg(2+) as cofactor.

The protein operates within antibiotic biosynthesis; novobiocin biosynthesis. Functionally, reduces the product formed from the reaction of NovW with dTDP-4-keto-6-deoxy-D-glucose to result in dTDP-5-methyl-L-rhamnose in the novobiocin biosynthesis pathway, an aminocoumarin family antibiotic that targets bacterial DNA gyrases. The polypeptide is dTDP-4-keto-6-deoxy-D-glucose reductase (novS) (Streptomyces niveus (Streptomyces spheroides)).